A 278-amino-acid chain; its full sequence is E3 ubiquitin-protein ligase CHIP (278 aa).

TPR repeat units lie at residues 10–43, 45–77, and 78–111; these read AERL…SPNV, AYWT…VHNS, and VKAH…GRCS. Positions 143 to 194 form a coiled coil; that stretch reads ELNSLKETCEAALNQQRALDMSRTEESSDEAYTAHTERLKALERVFKKAAEE. One can recognise a U-box domain in the interval 199 to 273; the sequence is EVPDYLCCNI…AAYLEKHVWA (75 aa).

In terms of assembly, interacts with HSC70-4, PP2AA1, PP2AA3 and PP2A5, as well as with UBC8, UBC9 and UBC10. Also interacts with the chloroplastic proteolytic subunits ClpP4, FtsH1 and FtsH2.

It carries out the reaction S-ubiquitinyl-[E2 ubiquitin-conjugating enzyme]-L-cysteine + [acceptor protein]-L-lysine = [E2 ubiquitin-conjugating enzyme]-L-cysteine + N(6)-ubiquitinyl-[acceptor protein]-L-lysine.. Its pathway is protein modification; protein ubiquitination. Has E3 ubiquitin-protein ligase activity and may target misfolded substrates towards proteasomal degradation. Regulates the activity of some serine/threonine-protein phosphatases by E3 ubiquitin-protein ligase activity. Required for responses to biotic and abiotic stresses such as auxin, abscisic acid (ABA), low and high temperature and darkness, probably through the activation of serine/threonine-protein phosphatase and the subsequent modification of the plasma membrane composition. Regulates the chloroplastic Clp proteolytic activity in response to stresses. Ubiquitylates FtsH1, a component of the chloroplast FtsH protease, and affects protein degradation in chloroplasts. Mediates plastid precursor degradation to prevent cytosolic precursor accumulation, together with the molecular chaperone HSC70-4. Mediates ubiquitination of transit peptides and thereby led to their degradation through the ubiquitin-proteasome system. The sequence is that of E3 ubiquitin-protein ligase CHIP from Arabidopsis thaliana (Mouse-ear cress).